A 271-amino-acid polypeptide reads, in one-letter code: Acetyl-coenzyme A carboxylase carboxyl transferase subunit beta (271 aa).

The 251-residue stretch at 21-271 (LWIQCPYCKQ…LGDLLALHTA (251 aa)) folds into the CoA carboxyltransferase N-terminal domain. Zn(2+) is bound by residues C25, C28, C43, and C46. Residues 25 to 46 (CPYCKQGSYRESLGNAQVCPHC) form a C4-type zinc finger.

Belongs to the AccD/PCCB family. Acetyl-CoA carboxylase is a heterohexamer composed of biotin carboxyl carrier protein (AccB), biotin carboxylase (AccC) and two subunits each of ACCase subunit alpha (AccA) and ACCase subunit beta (AccD). Zn(2+) serves as cofactor.

It localises to the cytoplasm. The enzyme catalyses N(6)-carboxybiotinyl-L-lysyl-[protein] + acetyl-CoA = N(6)-biotinyl-L-lysyl-[protein] + malonyl-CoA. The protein operates within lipid metabolism; malonyl-CoA biosynthesis; malonyl-CoA from acetyl-CoA: step 1/1. Its function is as follows. Component of the acetyl coenzyme A carboxylase (ACC) complex. Biotin carboxylase (BC) catalyzes the carboxylation of biotin on its carrier protein (BCCP) and then the CO(2) group is transferred by the transcarboxylase to acetyl-CoA to form malonyl-CoA. The polypeptide is Acetyl-coenzyme A carboxylase carboxyl transferase subunit beta (Lacticaseibacillus paracasei (strain ATCC 334 / BCRC 17002 / CCUG 31169 / CIP 107868 / KCTC 3260 / NRRL B-441) (Lactobacillus paracasei)).